The sequence spans 299 residues: Ribosomal protein L11 methyltransferase (299 aa).

S-adenosyl-L-methionine is bound by residues Thr152, Gly172, Asp194, and Asn234.

Belongs to the methyltransferase superfamily. PrmA family.

It is found in the cytoplasm. It carries out the reaction L-lysyl-[protein] + 3 S-adenosyl-L-methionine = N(6),N(6),N(6)-trimethyl-L-lysyl-[protein] + 3 S-adenosyl-L-homocysteine + 3 H(+). In terms of biological role, methylates ribosomal protein L11. This is Ribosomal protein L11 methyltransferase from Geobacter metallireducens (strain ATCC 53774 / DSM 7210 / GS-15).